The primary structure comprises 89 residues: Elongation factor 1-beta (89 aa).

It belongs to the EF-1-beta/EF-1-delta family.

Its function is as follows. Promotes the exchange of GDP for GTP in EF-1-alpha/GDP, thus allowing the regeneration of EF-1-alpha/GTP that could then be used to form the ternary complex EF-1-alpha/GTP/AAtRNA. This chain is Elongation factor 1-beta, found in Methanosarcina mazei (strain ATCC BAA-159 / DSM 3647 / Goe1 / Go1 / JCM 11833 / OCM 88) (Methanosarcina frisia).